The primary structure comprises 366 residues: Histone-lysine N-methyltransferase SETD7 (366 aa).

MORN repeat units lie at residues 36–58 (FEGN…DGST), 59–81 (LEGY…DGGV), and 106–128 (FKGQ…DGGS). The SET domain occupies 214 to 336 (ERVYVAESLI…ADEELTVAYG (123 aa)). Residues 226-228 (AGE), Asn-296, His-297, and Glu-356 each bind S-adenosyl-L-methionine.

It belongs to the class V-like SAM-binding methyltransferase superfamily. Histone-lysine methyltransferase family. SET7 subfamily. Interacts with IPF1/PDX-1. Widely expressed. Expressed in pancreatic islets.

It is found in the nucleus. Its subcellular location is the chromosome. It catalyses the reaction L-lysyl(4)-[histone H3] + S-adenosyl-L-methionine = N(6)-methyl-L-lysyl(4)-[histone H3] + S-adenosyl-L-homocysteine + H(+). It carries out the reaction L-lysyl-[protein] + S-adenosyl-L-methionine = N(6)-methyl-L-lysyl-[protein] + S-adenosyl-L-homocysteine + H(+). Histone methyltransferase that specifically monomethylates 'Lys-4' of histone H3. H3 'Lys-4' methylation represents a specific tag for epigenetic transcriptional activation. Plays a central role in the transcriptional activation of genes such as collagenase or insulin. Recruited by IPF1/PDX-1 to the insulin promoter, leading to activate transcription. Also has methyltransferase activity toward non-histone proteins such as CGAS, p53/TP53, TAF10, and possibly TAF7 by recognizing and binding the [KR]-[STA]-K in substrate proteins. Monomethylates 'Lys-189' of TAF10, leading to increase the affinity of TAF10 for RNA polymerase II. Monomethylates 'Lys-372' of p53/TP53, stabilizing p53/TP53 and increasing p53/TP53-mediated transcriptional activation. Monomethylates 'Lys-491' of CGAS, promoting interaction between SGF29 and CGAS. The protein is Histone-lysine N-methyltransferase SETD7 (SETD7) of Homo sapiens (Human).